The following is a 186-amino-acid chain: Outer-membrane lipoprotein LolB (186 aa).

The signal sequence occupies residues 1–16; sequence MRRLAVIASLAWALGG. The N-palmitoyl cysteine moiety is linked to residue Cys17. Cys17 carries the S-diacylglycerol cysteine lipid modification.

Belongs to the LolB family. Monomer.

It localises to the cell outer membrane. Plays a critical role in the incorporation of lipoproteins in the outer membrane after they are released by the LolA protein. This Thiobacillus denitrificans (strain ATCC 25259 / T1) protein is Outer-membrane lipoprotein LolB.